Consider the following 465-residue polypeptide: Cysteine--tRNA ligase (465 aa).

Residue cysteine 27 participates in Zn(2+) binding. The 'HIGH' region motif lies at proline 29–asparagine 39. Zn(2+) contacts are provided by cysteine 207, histidine 232, and glutamate 236. The short motif at lysine 264 to serine 268 is the 'KMSKS' region element. ATP is bound at residue lysine 267.

This sequence belongs to the class-I aminoacyl-tRNA synthetase family. Monomer. Requires Zn(2+) as cofactor.

The protein localises to the cytoplasm. It catalyses the reaction tRNA(Cys) + L-cysteine + ATP = L-cysteinyl-tRNA(Cys) + AMP + diphosphate. The protein is Cysteine--tRNA ligase of Clostridium botulinum (strain Loch Maree / Type A3).